The primary structure comprises 784 residues: E3 UFM1-protein ligase 1 homolog (784 aa).

Positions 398 to 414 (QEVDHGVMEEEKADKRE) are enriched in basic and acidic residues. The interval 398–472 (QEVDHGVMEE…ASNKKGGKDP (75 aa)) is disordered.

This sequence belongs to the UFL1 family.

In terms of biological role, E3 UFM1-protein ligase that mediates ufmylation of target proteins. The protein is E3 UFM1-protein ligase 1 homolog of Anopheles gambiae (African malaria mosquito).